A 349-amino-acid chain; its full sequence is tRNA N6-adenosine threonylcarbamoyltransferase (349 aa).

Fe cation-binding residues include H117 and H121. Substrate is bound by residues 140-144, D173, G186, and N284; that span reads LVSGG. D312 contributes to the Fe cation binding site.

Belongs to the KAE1 / TsaD family. It depends on Fe(2+) as a cofactor.

The protein localises to the cytoplasm. It catalyses the reaction L-threonylcarbamoyladenylate + adenosine(37) in tRNA = N(6)-L-threonylcarbamoyladenosine(37) in tRNA + AMP + H(+). Functionally, required for the formation of a threonylcarbamoyl group on adenosine at position 37 (t(6)A37) in tRNAs that read codons beginning with adenine. Is involved in the transfer of the threonylcarbamoyl moiety of threonylcarbamoyl-AMP (TC-AMP) to the N6 group of A37, together with TsaE and TsaB. TsaD likely plays a direct catalytic role in this reaction. The chain is tRNA N6-adenosine threonylcarbamoyltransferase from Psychrobacter arcticus (strain DSM 17307 / VKM B-2377 / 273-4).